The chain runs to 614 residues: 4-hydroxy-3-methylbut-2-en-1-yl diphosphate synthase (flavodoxin) (614 aa).

Cys-522, Cys-525, Cys-556, and Glu-563 together coordinate [4Fe-4S] cluster.

The protein belongs to the IspG family. Requires [4Fe-4S] cluster as cofactor.

The catalysed reaction is (2E)-4-hydroxy-3-methylbut-2-enyl diphosphate + oxidized [flavodoxin] + H2O + 2 H(+) = 2-C-methyl-D-erythritol 2,4-cyclic diphosphate + reduced [flavodoxin]. Its pathway is isoprenoid biosynthesis; isopentenyl diphosphate biosynthesis via DXP pathway; isopentenyl diphosphate from 1-deoxy-D-xylulose 5-phosphate: step 5/6. In terms of biological role, converts 2C-methyl-D-erythritol 2,4-cyclodiphosphate (ME-2,4cPP) into 1-hydroxy-2-methyl-2-(E)-butenyl 4-diphosphate. In Phocaeicola vulgatus (strain ATCC 8482 / DSM 1447 / JCM 5826 / CCUG 4940 / NBRC 14291 / NCTC 11154) (Bacteroides vulgatus), this protein is 4-hydroxy-3-methylbut-2-en-1-yl diphosphate synthase (flavodoxin).